The chain runs to 413 residues: Gamma-glutamyl phosphate reductase (413 aa).

Belongs to the gamma-glutamyl phosphate reductase family.

Its subcellular location is the cytoplasm. The catalysed reaction is L-glutamate 5-semialdehyde + phosphate + NADP(+) = L-glutamyl 5-phosphate + NADPH + H(+). It functions in the pathway amino-acid biosynthesis; L-proline biosynthesis; L-glutamate 5-semialdehyde from L-glutamate: step 2/2. Its function is as follows. Catalyzes the NADPH-dependent reduction of L-glutamate 5-phosphate into L-glutamate 5-semialdehyde and phosphate. The product spontaneously undergoes cyclization to form 1-pyrroline-5-carboxylate. This Geobacillus sp. (strain WCH70) protein is Gamma-glutamyl phosphate reductase.